The sequence spans 336 residues: NADH-quinone oxidoreductase subunit H (336 aa).

Helical transmembrane passes span 4–24, 75–95, 108–128, 154–174, 181–201, 233–253, 272–292, and 308–328; these read YILW…LVVA, YLFF…WAVI, LGLL…VIAG, MGFA…TGII, IWHW…IAGI, LFFL…SIMF, FVPG…MFLW, and LGWK…ACMV.

This sequence belongs to the complex I subunit 1 family. In terms of assembly, NDH-1 is composed of 14 different subunits. Subunits NuoA, H, J, K, L, M, N constitute the membrane sector of the complex.

It is found in the cell inner membrane. The catalysed reaction is a quinone + NADH + 5 H(+)(in) = a quinol + NAD(+) + 4 H(+)(out). NDH-1 shuttles electrons from NADH, via FMN and iron-sulfur (Fe-S) centers, to quinones in the respiratory chain. The immediate electron acceptor for the enzyme in this species is believed to be ubiquinone. Couples the redox reaction to proton translocation (for every two electrons transferred, four hydrogen ions are translocated across the cytoplasmic membrane), and thus conserves the redox energy in a proton gradient. This subunit may bind ubiquinone. This is NADH-quinone oxidoreductase subunit H from Francisella tularensis subsp. tularensis (strain FSC 198).